A 169-amino-acid chain; its full sequence is Thaumatin-like pathogenesis-related protein 2 (169 aa).

The signal sequence occupies residues 1–21 (MATSSAVLFFLLAVFAAGASA).

It belongs to the thaumatin family.

Functionally, associated with resistance against stem rust fungi. This chain is Thaumatin-like pathogenesis-related protein 2 (RASTL-2), found in Avena sativa (Oat).